Here is a 275-residue protein sequence, read N- to C-terminus: Putative acyl-[acyl-carrier-protein] desaturase DesA2 (275 aa).

Residues E107, H110, E159, E189, and H192 each contribute to the Fe cation site.

This sequence belongs to the fatty acid desaturase type 2 family. As to quaternary structure, homodimer. Fe(2+) is required as a cofactor.

It functions in the pathway lipid metabolism; fatty acid metabolism. Functionally, may be a desaturase involved in mycobacterial fatty acid biosynthesis. This chain is Putative acyl-[acyl-carrier-protein] desaturase DesA2 (desA2), found in Mycobacterium tuberculosis (strain CDC 1551 / Oshkosh).